A 111-amino-acid polypeptide reads, in one-letter code: PHD finger-like domain-containing protein 5A (111 aa).

This sequence belongs to the PHF5 family.

The polypeptide is PHD finger-like domain-containing protein 5A (Drosophila melanogaster (Fruit fly)).